The sequence spans 421 residues: E3 ubiquitin protein ligase DRIP1 (421 aa).

An RING-type zinc finger spans residues 16–57 (CSICDNILRDATTISECLHTFCRKCIYEKITEDEIETCPVCN). 2 stretches are compositionally biased toward polar residues: residues 106 to 121 (ISSLVVSTPMVSAQAG) and 157 to 172 (ESTSSPDTLNKFTQNK). Disordered stretches follow at residues 106–198 (ISSL…WDSK) and 216–307 (PLKS…QERR). Over residues 178–198 (SCKESISNKENKDGDEPWDSK) the composition is skewed to basic and acidic residues. Residues 218–227 (KSSASQGSGS) show a composition bias toward low complexity. Positions 244-253 (TKTKNKKRKC) are enriched in basic residues. The segment covering 262 to 271 (NGDPTTSETV) has biased composition (polar residues). Basic residues predominate over residues 274–284 (KRMRTTQRKRS). Residues 285–294 (ATTLGDSRNL) are compositionally biased toward polar residues.

As to quaternary structure, interacts with DREB2A. Autoubiquitinated. As to expression, expressed in roots, leaves and flowers.

It localises to the nucleus. The catalysed reaction is S-ubiquitinyl-[E2 ubiquitin-conjugating enzyme]-L-cysteine + [acceptor protein]-L-lysine = [E2 ubiquitin-conjugating enzyme]-L-cysteine + N(6)-ubiquitinyl-[acceptor protein]-L-lysine.. It participates in protein modification; protein ubiquitination. Functionally, E3 ubiquitin-protein ligase that acts as a negative regulator of the response to water stress. Mediates ubiquitination and subsequent proteasomal degradation of the drought-induced transcriptional activator DREB2A. Functionally redundant with DRIP2. The protein is E3 ubiquitin protein ligase DRIP1 (DRIP1) of Arabidopsis thaliana (Mouse-ear cress).